Here is a 209-residue protein sequence, read N- to C-terminus: PRA1 family protein A1 (209 aa).

4 consecutive transmembrane segments (helical) span residues 51–73, 77–99, 144–164, and 166–186; these read LYYYRTNYFIMIVVILGLGVLTR, IFAALLTALSLAFLNDSFAGSFS, VFVLTCSLVSFALWYISSGLL, and VSVALLIAHLATILHASLRTP.

This sequence belongs to the PRA1 family.

The protein resides in the endoplasmic reticulum membrane. Its function is as follows. May be involved in both secretory and endocytic intracellular trafficking in the endosomal/prevacuolar compartments. The polypeptide is PRA1 family protein A1 (PRA1A1) (Arabidopsis thaliana (Mouse-ear cress)).